The primary structure comprises 175 residues: Protein FAM89A (175 aa).

A disordered region spans residues 141-175 (FQEQGSLQDGQHHGSPRDQSPLTHLSSSDWILESI). Polar residues predominate over residues 157-169 (RDQSPLTHLSSSD).

The protein belongs to the FAM89 family.

This Mus musculus (Mouse) protein is Protein FAM89A (Fam89a).